Here is a 361-residue protein sequence, read N- to C-terminus: Elongator complex protein 4 (361 aa).

Disordered regions lie at residues 93–124 (QLPGDSDRPNKNENSAGEDNHSSPPSKNPQQE) and 338–361 (DDEQKDTKISNTNPQKQPVKSLDF). Composition is skewed to polar residues over residues 104–121 (NENSAGEDNHSSPPSKNP) and 346–355 (ISNTNPQKQP).

Belongs to the ELP4 family. In terms of assembly, component of the elongator complex.

It localises to the cytoplasm. It is found in the nucleus. Its pathway is tRNA modification; 5-methoxycarbonylmethyl-2-thiouridine-tRNA biosynthesis. In terms of biological role, component of the elongator complex, a multiprotein complex which is required for multiple tRNA modifications, including mcm5U (5-methoxycarbonylmethyl uridine), mcm5s2U (5-methoxycarbonylmethyl-2-thiouridine), and ncm5U (5-carbamoylmethyl uridine). The elongator complex catalyzes formation of carboxymethyluridine in the wobble base at position 34 in tRNAs. The sequence is that of Elongator complex protein 4 from Schizosaccharomyces pombe (strain 972 / ATCC 24843) (Fission yeast).